The primary structure comprises 195 residues: FMN-dependent NADH:quinone oxidoreductase (195 aa).

Residues Ser-9, Ser-15–Ser-17, Met-85–Phe-88, and Ser-129–Gly-132 each bind FMN.

The protein belongs to the azoreductase type 1 family. In terms of assembly, homodimer. Requires FMN as cofactor.

The enzyme catalyses 2 a quinone + NADH + H(+) = 2 a 1,4-benzosemiquinone + NAD(+). It carries out the reaction N,N-dimethyl-1,4-phenylenediamine + anthranilate + 2 NAD(+) = 2-(4-dimethylaminophenyl)diazenylbenzoate + 2 NADH + 2 H(+). Functionally, quinone reductase that provides resistance to thiol-specific stress caused by electrophilic quinones. Also exhibits azoreductase activity. Catalyzes the reductive cleavage of the azo bond in aromatic azo compounds to the corresponding amines. This chain is FMN-dependent NADH:quinone oxidoreductase, found in Stenotrophomonas maltophilia (strain K279a).